Reading from the N-terminus, the 247-residue chain is ATP synthase delta chain, chloroplastic (247 aa).

A chloroplast-targeting transit peptide spans 1–60 (MAALRLASFTLRPAAAAAASASSGATPAAPRSASFARAARGLPSLRLAPPRRRGDLVRPR).

Belongs to the ATPase delta chain family. In terms of assembly, F-type ATPases have 2 components, CF(1) - the catalytic core - and CF(0) - the membrane proton channel. CF(1) has five subunits: alpha(3), beta(3), gamma(1), delta(1), epsilon(1). CF(0) has three main subunits: a, b and c.

The protein resides in the plastid. It is found in the chloroplast thylakoid membrane. Its function is as follows. This protein seems to be part of the stalk that links CF(0) to CF(1). It either transmits conformational changes from CF(0) into CF(1) or is implicated in proton conduction. The chain is ATP synthase delta chain, chloroplastic (ATPD) from Sorghum bicolor (Sorghum).